The following is a 262-amino-acid chain: Pyridoxine 5'-phosphate synthase (262 aa).

N6 lines the 3-amino-2-oxopropyl phosphate pocket. 8 to 9 (DH) serves as a coordination point for 1-deoxy-D-xylulose 5-phosphate. Residue R17 coordinates 3-amino-2-oxopropyl phosphate. The active-site Proton acceptor is H43. Residues R45 and H50 each contribute to the 1-deoxy-D-xylulose 5-phosphate site. E70 acts as the Proton acceptor in catalysis. 1-deoxy-D-xylulose 5-phosphate is bound at residue T102. Catalysis depends on H215, which acts as the Proton donor. 3-amino-2-oxopropyl phosphate contacts are provided by residues G216 and 237 to 238 (GH).

Belongs to the PNP synthase family. In terms of assembly, homooctamer; tetramer of dimers.

It is found in the cytoplasm. It catalyses the reaction 3-amino-2-oxopropyl phosphate + 1-deoxy-D-xylulose 5-phosphate = pyridoxine 5'-phosphate + phosphate + 2 H2O + H(+). It participates in cofactor biosynthesis; pyridoxine 5'-phosphate biosynthesis; pyridoxine 5'-phosphate from D-erythrose 4-phosphate: step 5/5. Functionally, catalyzes the complicated ring closure reaction between the two acyclic compounds 1-deoxy-D-xylulose-5-phosphate (DXP) and 3-amino-2-oxopropyl phosphate (1-amino-acetone-3-phosphate or AAP) to form pyridoxine 5'-phosphate (PNP) and inorganic phosphate. The sequence is that of Pyridoxine 5'-phosphate synthase from Helicobacter pylori (strain G27).